The sequence spans 447 residues: Tubulin beta chain (447 aa).

8 residues coordinate GTP: glutamine 11, glutamate 69, serine 138, glycine 142, threonine 143, glycine 144, asparagine 204, and asparagine 226. Glutamate 69 lines the Mg(2+) pocket. The disordered stretch occupies residues 424 to 447 (QYQEASVSDAEEEYDEEAPLEGEE). Residues 432–447 (DAEEEYDEEAPLEGEE) are compositionally biased toward acidic residues.

Belongs to the tubulin family. As to quaternary structure, dimer of alpha and beta chains. A typical microtubule is a hollow water-filled tube with an outer diameter of 25 nm and an inner diameter of 15 nM. Alpha-beta heterodimers associate head-to-tail to form protofilaments running lengthwise along the microtubule wall with the beta-tubulin subunit facing the microtubule plus end conferring a structural polarity. Microtubules usually have 13 protofilaments but different protofilament numbers can be found in some organisms and specialized cells. Mg(2+) is required as a cofactor.

It localises to the cytoplasm. The protein resides in the cytoskeleton. In terms of biological role, tubulin is the major constituent of microtubules, a cylinder consisting of laterally associated linear protofilaments composed of alpha- and beta-tubulin heterodimers. Microtubules grow by the addition of GTP-tubulin dimers to the microtubule end, where a stabilizing cap forms. Below the cap, tubulin dimers are in GDP-bound state, owing to GTPase activity of alpha-tubulin. This Zymoseptoria tritici (Speckled leaf blotch fungus) protein is Tubulin beta chain (TUB1).